Reading from the N-terminus, the 232-residue chain is MSRFTFKQFHINQDSCAMKVSTDGILLGAWADVKHCKNILDMGSGTGLLALMLAQRTEENCQIQAVELDPIAVKQAQENINDSVWKNRIQLIQTDIQHFLQTTAQTFDLIVANPPYFEQGIACKNEERELARYTKQSHLNWLEWAATRLSENGRISFVLPYEAGKTLIKSTALFCIKQTNVITKIGKTPQRMLLTFAKQPQVLMQDQLVIYDADNQYTEAFIKLTKDFYLKF.

Belongs to the methyltransferase superfamily. tRNA (adenine-N(6)-)-methyltransferase family.

It is found in the cytoplasm. The catalysed reaction is adenosine(37) in tRNA1(Val) + S-adenosyl-L-methionine = N(6)-methyladenosine(37) in tRNA1(Val) + S-adenosyl-L-homocysteine + H(+). Specifically methylates the adenine in position 37 of tRNA(1)(Val) (anticodon cmo5UAC). This Haemophilus influenzae (strain PittGG) protein is tRNA1(Val) (adenine(37)-N6)-methyltransferase.